Reading from the N-terminus, the 514-residue chain is 2,3-bisphosphoglycerate-independent phosphoglycerate mutase (514 aa).

Positions 14 and 64 each coordinate Mn(2+). Catalysis depends on serine 64, which acts as the Phosphoserine intermediate. Substrate is bound by residues histidine 125, 155–156 (RD), arginine 187, arginine 193, 263–266 (RADR), and lysine 336. Mn(2+) is bound by residues aspartate 403, histidine 407, aspartate 444, histidine 445, and histidine 463.

The protein belongs to the BPG-independent phosphoglycerate mutase family. Monomer. Mn(2+) is required as a cofactor.

It catalyses the reaction (2R)-2-phosphoglycerate = (2R)-3-phosphoglycerate. It functions in the pathway carbohydrate degradation; glycolysis; pyruvate from D-glyceraldehyde 3-phosphate: step 3/5. Catalyzes the interconversion of 2-phosphoglycerate and 3-phosphoglycerate. In Shewanella sediminis (strain HAW-EB3), this protein is 2,3-bisphosphoglycerate-independent phosphoglycerate mutase.